A 182-amino-acid polypeptide reads, in one-letter code: Lipoprotein signal peptidase (182 aa).

Helical transmembrane passes span 12–32 (VAVF…TKAW), 68–88 (ATWV…VAGV), and 91–111 (ISMK…GNLI). Active-site residues include Asp-127 and Asp-140. Residues 135-155 (VGNVADIYLVVAGVVLVILIL) traverse the membrane as a helical segment.

This sequence belongs to the peptidase A8 family.

The protein localises to the cell membrane. The catalysed reaction is Release of signal peptides from bacterial membrane prolipoproteins. Hydrolyzes -Xaa-Yaa-Zaa-|-(S,diacylglyceryl)Cys-, in which Xaa is hydrophobic (preferably Leu), and Yaa (Ala or Ser) and Zaa (Gly or Ala) have small, neutral side chains.. Its pathway is protein modification; lipoprotein biosynthesis (signal peptide cleavage). Functionally, this protein specifically catalyzes the removal of signal peptides from prolipoproteins. This chain is Lipoprotein signal peptidase, found in Bifidobacterium longum subsp. infantis (strain ATCC 15697 / DSM 20088 / JCM 1222 / NCTC 11817 / S12).